The chain runs to 99 residues: Small ribosomal subunit protein uS14m (99 aa).

It belongs to the universal ribosomal protein uS14 family.

The protein resides in the mitochondrion. This chain is Small ribosomal subunit protein uS14m (RPS14), found in Prototheca wickerhamii.